The chain runs to 416 residues: tRNA(Met) cytidine acetate ligase (416 aa).

ATP-binding positions include V7–H20, G101, N163, and R188.

It belongs to the TmcAL family.

It is found in the cytoplasm. It carries out the reaction cytidine(34) in elongator tRNA(Met) + acetate + ATP = N(4)-acetylcytidine(34) in elongator tRNA(Met) + AMP + diphosphate. In terms of biological role, catalyzes the formation of N(4)-acetylcytidine (ac(4)C) at the wobble position of elongator tRNA(Met), using acetate and ATP as substrates. First activates an acetate ion to form acetyladenylate (Ac-AMP) and then transfers the acetyl group to tRNA to form ac(4)C34. In Bacillus licheniformis (strain ATCC 14580 / DSM 13 / JCM 2505 / CCUG 7422 / NBRC 12200 / NCIMB 9375 / NCTC 10341 / NRRL NRS-1264 / Gibson 46), this protein is tRNA(Met) cytidine acetate ligase.